The following is a 154-amino-acid chain: NAD(P)H-quinone oxidoreductase subunit N (154 aa).

Belongs to the complex I NdhN subunit family. As to quaternary structure, NDH-1 can be composed of about 15 different subunits; different subcomplexes with different compositions have been identified which probably have different functions.

It is found in the cellular thylakoid membrane. It carries out the reaction a plastoquinone + NADH + (n+1) H(+)(in) = a plastoquinol + NAD(+) + n H(+)(out). It catalyses the reaction a plastoquinone + NADPH + (n+1) H(+)(in) = a plastoquinol + NADP(+) + n H(+)(out). Functionally, NDH-1 shuttles electrons from an unknown electron donor, via FMN and iron-sulfur (Fe-S) centers, to quinones in the respiratory and/or the photosynthetic chain. The immediate electron acceptor for the enzyme in this species is believed to be plastoquinone. Couples the redox reaction to proton translocation, and thus conserves the redox energy in a proton gradient. Cyanobacterial NDH-1 also plays a role in inorganic carbon-concentration. The polypeptide is NAD(P)H-quinone oxidoreductase subunit N (Prochlorococcus marinus (strain NATL2A)).